Reading from the N-terminus, the 373-residue chain is Dual-specificity RNA methyltransferase RlmN (373 aa).

The Proton acceptor role is filled by glutamate 94. A Radical SAM core domain is found at 100–339 (EDDRATLCVS…VIVRKTRGDD (240 aa)). A disulfide bond links cysteine 107 and cysteine 344. 3 residues coordinate [4Fe-4S] cluster: cysteine 114, cysteine 118, and cysteine 121. Residues 168–169 (GE), serine 200, 222–224 (SIH), and asparagine 301 contribute to the S-adenosyl-L-methionine site. Cysteine 344 (S-methylcysteine intermediate) is an active-site residue.

This sequence belongs to the radical SAM superfamily. RlmN family. The cofactor is [4Fe-4S] cluster.

Its subcellular location is the cytoplasm. The enzyme catalyses adenosine(2503) in 23S rRNA + 2 reduced [2Fe-2S]-[ferredoxin] + 2 S-adenosyl-L-methionine = 2-methyladenosine(2503) in 23S rRNA + 5'-deoxyadenosine + L-methionine + 2 oxidized [2Fe-2S]-[ferredoxin] + S-adenosyl-L-homocysteine. It catalyses the reaction adenosine(37) in tRNA + 2 reduced [2Fe-2S]-[ferredoxin] + 2 S-adenosyl-L-methionine = 2-methyladenosine(37) in tRNA + 5'-deoxyadenosine + L-methionine + 2 oxidized [2Fe-2S]-[ferredoxin] + S-adenosyl-L-homocysteine. Specifically methylates position 2 of adenine 2503 in 23S rRNA and position 2 of adenine 37 in tRNAs. m2A2503 modification seems to play a crucial role in the proofreading step occurring at the peptidyl transferase center and thus would serve to optimize ribosomal fidelity. The sequence is that of Dual-specificity RNA methyltransferase RlmN from Shewanella baltica (strain OS155 / ATCC BAA-1091).